A 918-amino-acid polypeptide reads, in one-letter code: Probable lipoxygenase 6 (918 aa).

The segment at 56 to 76 (AASPSSGIKGGGAGERRPAPE) is disordered. Residues 90–218 (QKEDIKEAVA…ELPTKRVFFS (129 aa)) form the PLAT domain. A Lipoxygenase domain is found at 221–918 (PYLPSETPPG…CRGVPNSISI (698 aa)). Fe cation-binding residues include H573, H578, H765, N769, and I918.

The protein belongs to the lipoxygenase family. The cofactor is Fe cation.

It carries out the reaction (9Z,12Z)-octadecadienoate + O2 = (13S)-hydroperoxy-(9Z,11E)-octadecadienoate. The enzyme catalyses (9Z,12Z,15Z)-octadecatrienoate + O2 = (13S)-hydroperoxy-(9Z,11E,15Z)-octadecatrienoate. The protein operates within lipid metabolism; oxylipin biosynthesis. Its function is as follows. Plant lipoxygenase may be involved in a number of diverse aspects of plant physiology including growth and development, pest resistance, and senescence or responses to wounding. Catalyzes the hydroperoxidation of lipids containing a cis,cis-1,4-pentadiene structure. In Oryza sativa subsp. japonica (Rice), this protein is Probable lipoxygenase 6.